Consider the following 1256-residue polypeptide: Centrosome and spindle pole-associated protein 1 (1256 aa).

Coiled-coil stretches lie at residues Ala38–Asp62 and Glu114–Leu135. Over residues Gly189–Ser208 the composition is skewed to basic and acidic residues. Disordered regions lie at residues Gly189–Ser244 and Ala381–Phe403. Over residues Leu222–Asn232 the composition is skewed to polar residues. The residue at position 244 (Ser244) is a Phosphoserine. Residues Ser244–Leu270 adopt a coiled-coil conformation. Residues Gln417–Ala449 are a coiled coil. Residues Ser459 and Ser527 each carry the phosphoserine modification. Positions Ser625 to Asn669 form a coiled coil. 2 disordered regions span residues Ala735–Glu757 and Glu813–Glu853. Polar residues predominate over residues Asn736–Pro748. A phosphoserine mark is found at Ser901 and Ser920. The tract at residues Ser913 to Ala932 is disordered. The stretch at Ala925–Met964 forms a coiled coil. The residue at position 966 (Ser966) is a Phosphoserine. Disordered stretches follow at residues Glu1114 to Val1147 and Leu1232 to Gly1256. Residues Phe1246 to Gly1256 show a composition bias toward polar residues.

In terms of assembly, interacts with PLEKHG6. Interacts with ARMC9, TOGARAM1, CCDC66, CEP104 and CEP290. Phosphorylated. Phosphorylation increases in colcemide-treated cells. Expressed in adult and fetal brain with enrichment in the cerebellum. Detected in testis.

It is found in the cytoplasm. The protein resides in the cytoskeleton. The protein localises to the microtubule organizing center. It localises to the centrosome. Its subcellular location is the spindle. It is found in the spindle pole. The protein resides in the cell projection. The protein localises to the cilium. Functionally, may play a role in cell-cycle-dependent microtubule organization. This is Centrosome and spindle pole-associated protein 1 (CSPP1) from Homo sapiens (Human).